Consider the following 322-residue polypeptide: Ribose-phosphate pyrophosphokinase 1 (322 aa).

ATP-binding positions include 39–41 (DGE) and 98–99 (RQ). Mg(2+) is bound by residues His132 and Asp173. The active site involves Lys196. Residues Arg198, Asp224, and 228–232 (DTAGT) each bind D-ribose 5-phosphate.

It belongs to the ribose-phosphate pyrophosphokinase family. Class I subfamily. As to quaternary structure, homohexamer. Mg(2+) is required as a cofactor.

It localises to the cytoplasm. It carries out the reaction D-ribose 5-phosphate + ATP = 5-phospho-alpha-D-ribose 1-diphosphate + AMP + H(+). The protein operates within metabolic intermediate biosynthesis; 5-phospho-alpha-D-ribose 1-diphosphate biosynthesis; 5-phospho-alpha-D-ribose 1-diphosphate from D-ribose 5-phosphate (route I): step 1/1. Involved in the biosynthesis of the central metabolite phospho-alpha-D-ribosyl-1-pyrophosphate (PRPP) via the transfer of pyrophosphoryl group from ATP to 1-hydroxyl of ribose-5-phosphate (Rib-5-P). This is Ribose-phosphate pyrophosphokinase 1 from Streptococcus agalactiae serotype III (strain NEM316).